A 1034-amino-acid chain; its full sequence is N-acetyl-beta-glucosaminyl-glycoprotein 4-beta-N-acetylgalactosaminyltransferase 1 (1034 aa).

Topologically, residues 1–12 (MPWFPVKKVRKQ) are cytoplasmic. Residues 13-31 (MKLLLLLLLLTCAAWLTYV) traverse the membrane as a helical; Signal-anchor for type II membrane protein segment. Residues 32–1034 (HRSLVRPGRA…SRKGARAQRS (1003 aa)) are Lumenal-facing. The segment at 51–104 (DGEKLTGVTDSRGVRVPSSTQRSEDSSESHEEEQAPEGRGPNMLFPGGPRKPPP) is disordered. Over residues 72-83 (RSEDSSESHEEE) the composition is skewed to basic and acidic residues. Asn-106 carries N-linked (GlcNAc...) asparagine glycosylation. One can recognise a PA14 domain in the interval 109–279 (HQTPPWREEF…LKFEIIDSAH (171 aa)). Disordered stretches follow at residues 450–486 (PTDA…DEQT) and 556–600 (RVQL…QLHG). A compositionally biased stretch (low complexity) spans 461-473 (TPTPAASTGTTAS). Asn-611 is a glycosylation site (N-linked (GlcNAc...) asparagine). 2 disordered regions span residues 626–669 (SQVS…PLGR) and 782–801 (GDED…HPDS). Acidic residues predominate over residues 636 to 661 (EGEEGEEDGAPGDEATSEDSEEEEEP).

The protein belongs to the chondroitin N-acetylgalactosaminyltransferase family.

The protein resides in the golgi apparatus. It localises to the golgi stack membrane. The enzyme catalyses an N-acetyl-beta-D-glucosaminyl derivative + UDP-N-acetyl-alpha-D-galactosamine = an N-acetyl-beta-D-galactosaminyl-(1-&gt;4)-N-acetyl-beta-D-glucosaminyl derivative + UDP + H(+). Functionally, transfers N-acetylgalactosamine (GalNAc) from UDP-GalNAc to N-acetylglucosamine-beta-benzyl with a beta-1,4-linkage to form N,N'-diacetyllactosediamine, GalNAc-beta-1,4-GlcNAc structures in N-linked glycans and probably O-linked glycans. This Mus musculus (Mouse) protein is N-acetyl-beta-glucosaminyl-glycoprotein 4-beta-N-acetylgalactosaminyltransferase 1 (B4galnt4).